A 1010-amino-acid chain; its full sequence is Phosphoenolpyruvate carboxylase (1010 aa).

Positions 1–18 (MIMRSPETSGASMPQSTA) are enriched in polar residues. Disordered regions lie at residues 1–36 (MIMRSPETSGASMPQSTAHVPDGEQPRASGGSPGAG) and 132–154 (LRPSRSQDDETAAPFDPFAPPLA). Residues His195 and Lys652 contribute to the active site. The tract at residues 967–986 (QNRQPPMSESPGTPEDRRTY) is disordered.

This sequence belongs to the PEPCase type 1 family. Mg(2+) is required as a cofactor.

The enzyme catalyses oxaloacetate + phosphate = phosphoenolpyruvate + hydrogencarbonate. Forms oxaloacetate, a four-carbon dicarboxylic acid source for the tricarboxylic acid cycle. The chain is Phosphoenolpyruvate carboxylase from Parasynechococcus marenigrum (strain WH8102).